Here is a 263-residue protein sequence, read N- to C-terminus: HTH-type transcriptional repressor NanR (263 aa).

Positions 1 to 23 are disordered; the sequence is MSPMNAFDPQAEDSTTTIGRNLR. The HTH gntR-type domain maps to 30–98; it reads KKLSEMVEEE…NGERARVSRP (69 aa). Residues 58-77 constitute a DNA-binding region (H-T-H motif); the sequence is ERELMAFFNVGRPSVREALA.

The protein belongs to the NanR family.

In terms of biological role, transcriptional repressor that controls expression of the genes required for the catabolism of sialic acids. The chain is HTH-type transcriptional repressor NanR from Escherichia coli O45:K1 (strain S88 / ExPEC).